Reading from the N-terminus, the 238-residue chain is Ribonuclease PH (238 aa).

Phosphate is bound by residues Arg86 and 124-126 (GTR).

Belongs to the RNase PH family. Homohexameric ring arranged as a trimer of dimers.

The enzyme catalyses tRNA(n+1) + phosphate = tRNA(n) + a ribonucleoside 5'-diphosphate. Functionally, phosphorolytic 3'-5' exoribonuclease that plays an important role in tRNA 3'-end maturation. Removes nucleotide residues following the 3'-CCA terminus of tRNAs; can also add nucleotides to the ends of RNA molecules by using nucleoside diphosphates as substrates, but this may not be physiologically important. Probably plays a role in initiation of 16S rRNA degradation (leading to ribosome degradation) during starvation. This chain is Ribonuclease PH, found in Parvibaculum lavamentivorans (strain DS-1 / DSM 13023 / NCIMB 13966).